The following is a 531-amino-acid chain: Apolipoprotein N-acyltransferase (531 aa).

7 consecutive transmembrane segments (helical) span residues 8–28 (IILL…LLAM), 34–54 (FGIF…IDGV), 74–94 (WSFG…AFLV), 105–125 (LAVV…VLVA), 128–148 (LWSD…VAEW), 178–198 (VLNV…PALI), and 206–226 (VGLA…YYRL). Residues 243–493 (VQPVIDQAKK…KGVTDAILPG (251 aa)) enclose the CN hydrolase domain. Residue E287 is the Proton acceptor of the active site. K351 is a catalytic residue. C405 functions as the Nucleophile in the catalytic mechanism. Residues 501–521 (SMLRGRIFWFTGVFLLLVAAI) traverse the membrane as a helical segment.

It belongs to the CN hydrolase family. Apolipoprotein N-acyltransferase subfamily.

It localises to the cell inner membrane. It catalyses the reaction N-terminal S-1,2-diacyl-sn-glyceryl-L-cysteinyl-[lipoprotein] + a glycerophospholipid = N-acyl-S-1,2-diacyl-sn-glyceryl-L-cysteinyl-[lipoprotein] + a 2-acyl-sn-glycero-3-phospholipid + H(+). It functions in the pathway protein modification; lipoprotein biosynthesis (N-acyl transfer). Functionally, catalyzes the phospholipid dependent N-acylation of the N-terminal cysteine of apolipoprotein, the last step in lipoprotein maturation. The chain is Apolipoprotein N-acyltransferase from Sinorhizobium fredii (strain NBRC 101917 / NGR234).